Consider the following 355-residue polypeptide: Protein RecA (355 aa).

Residue 67-74 coordinates ATP; it reads GPESSGKT. Residues 336 to 355 are disordered; that stretch reads NSAASDYEDNENEEMNNEEF. Acidic residues predominate over residues 341-355; it reads DYEDNENEEMNNEEF.

It belongs to the RecA family.

The protein localises to the cytoplasm. Can catalyze the hydrolysis of ATP in the presence of single-stranded DNA, the ATP-dependent uptake of single-stranded DNA by duplex DNA, and the ATP-dependent hybridization of homologous single-stranded DNAs. It interacts with LexA causing its activation and leading to its autocatalytic cleavage. The polypeptide is Protein RecA (Photorhabdus laumondii subsp. laumondii (strain DSM 15139 / CIP 105565 / TT01) (Photorhabdus luminescens subsp. laumondii)).